A 929-amino-acid chain; its full sequence is Facilitated trehalose transporter Tret1 (929 aa).

The interval methionine 1–serine 275 is disordered. Residues methionine 1 to proline 462 lie on the Cytoplasmic side of the membrane. Residues glycine 10–glycine 26 are compositionally biased toward gly residues. Residues lysine 41–glutamate 59 show a composition bias toward basic and acidic residues. Polar residues predominate over residues serine 60–aspartate 72. 3 stretches are compositionally biased toward low complexity: residues alanine 85 to arginine 141, glutamine 168 to glutamine 178, and serine 237 to aspartate 254. A phosphoserine mark is found at serine 320, serine 321, and serine 322. Residues valine 352 to arginine 371 form a disordered region. 2 positions are modified to phosphoserine: serine 392 and serine 394. The segment at phenylalanine 398–arginine 420 is disordered. The span at arginine 402–threonine 413 shows a compositional bias: polar residues. The helical transmembrane segment at isoleucine 463–glycine 483 threads the bilayer. Over phenylalanine 484–serine 512 the chain is Extracellular. A glycan (N-linked (GlcNAc...) asparagine) is linked at asparagine 500. A helical transmembrane segment spans residues tryptophan 513 to isoleucine 533. The Cytoplasmic portion of the chain corresponds to glutamate 534–threonine 541. The helical transmembrane segment at isoleucine 542–valine 562 threads the bilayer. Residues proline 563–arginine 569 lie on the Extracellular side of the membrane. Residues phenylalanine 570 to threonine 590 form a helical membrane-spanning segment. At valine 591 to arginine 596 the chain is on the cytoplasmic side. Residues glycine 597–alanine 617 form a helical membrane-spanning segment. At glycine 618–serine 624 the chain is on the extracellular side. Residues methionine 625–proline 645 traverse the membrane as a helical segment. At glutamate 646–proline 708 the chain is on the cytoplasmic side. The helical transmembrane segment at leucine 709–phenylalanine 729 threads the bilayer. Topologically, residues tyrosine 730–asparagine 745 are extracellular. The chain crosses the membrane as a helical span at residues valine 746–isoleucine 766. Residues aspartate 767–lysine 772 are Cytoplasmic-facing. The helical transmembrane segment at isoleucine 773–phenylalanine 793 threads the bilayer. Over tyrosine 794 to asparagine 804 the chain is Extracellular. A helical membrane pass occupies residues valine 805–glycine 825. Residues proline 826–lysine 839 are Cytoplasmic-facing. The helical transmembrane segment at isoleucine 840–threonine 860 threads the bilayer. Topologically, residues lysine 861–histidine 873 are extracellular. A helical membrane pass occupies residues glycine 874 to valine 894. Residues proline 895–methionine 929 lie on the Cytoplasmic side of the membrane. A phosphoserine mark is found at serine 917 and serine 918.

The protein belongs to the major facilitator superfamily. Sugar transporter (TC 2.A.1.1) family. Trehalose transporter subfamily.

It is found in the cell membrane. Low-capacity facilitative transporter for trehalose. Does not transport maltose, sucrose or lactose. Mediates the bidirectional transfer of trehalose. Responsible for the transport of trehalose synthesized in the fat body and the incorporation of trehalose into other tissues that require a carbon source, thereby regulating trehalose levels in the hemolymph. The sequence is that of Facilitated trehalose transporter Tret1 from Drosophila grimshawi (Hawaiian fruit fly).